We begin with the raw amino-acid sequence, 126 residues long: uncharacterized protein (126 aa).

This is an uncharacterized protein from Xylella fastidiosa (strain 9a5c).